We begin with the raw amino-acid sequence, 149 residues long: Protegrin-1 (149 aa).

Positions 1–29 (METQRASLCLGRWSLWLLLLALVVPSASA) are cleaved as a signal peptide. The propeptide occupies 30–130 (QALSYREAVL…DITCNEVQGV (101 aa)). A disordered region spans residues 61–80 (DQPPKADEDPGTPKPVSFTV). 4 disulfides stabilise this stretch: Cys85-Cys96, Cys107-Cys124, Cys136-Cys145, and Cys138-Cys143. The residue at position 148 (Arg148) is an Arginine amide.

The protein belongs to the cathelicidin family.

The protein localises to the secreted. Microbicidal activity. Active against E.coli, Listeria monocytogenes and C.albicans, in vitro. The chain is Protegrin-1 (NPG1) from Sus scrofa (Pig).